The following is a 504-amino-acid chain: Cytochrome P450 2D10 (504 aa).

A glycan (O-linked (GlcNAc) serine) is linked at Ser382. Residue Cys446 participates in heme binding.

Belongs to the cytochrome P450 family. Heme is required as a cofactor.

The protein localises to the endoplasmic reticulum membrane. It localises to the microsome membrane. The enzyme catalyses an organic molecule + reduced [NADPH--hemoprotein reductase] + O2 = an alcohol + oxidized [NADPH--hemoprotein reductase] + H2O + H(+). Its function is as follows. Cytochromes P450 are a group of heme-thiolate monooxygenases. In liver microsomes, this enzyme is involved in an NADPH-dependent electron transport pathway. It oxidizes a variety of structurally unrelated compounds, including steroids, fatty acids, and xenobiotics. This chain is Cytochrome P450 2D10 (Cyp2d10), found in Rattus norvegicus (Rat).